A 207-amino-acid chain; its full sequence is HTH-type transcriptional regulator BetI 2 (207 aa).

An HTH tetR-type domain is found at 8-68; it reads PIRRQQLIKA…ATMRQILTDL (61 aa). The segment at residues 31-50 is a DNA-binding region (H-T-H motif); it reads TVMRIARHAGVSAGIISHYF.

It participates in amine and polyamine biosynthesis; betaine biosynthesis via choline pathway [regulation]. Functionally, repressor involved in the biosynthesis of the osmoprotectant glycine betaine. It represses transcription of the choline transporter BetT and the genes of BetAB involved in the synthesis of glycine betaine. This chain is HTH-type transcriptional regulator BetI 2, found in Chromohalobacter salexigens (strain ATCC BAA-138 / DSM 3043 / CIP 106854 / NCIMB 13768 / 1H11).